The primary structure comprises 450 residues: ATP-dependent protease ATPase subunit HslU (450 aa).

ATP contacts are provided by residues valine 29, 71–76 (GVGKTE), aspartate 261, glutamate 328, and arginine 400.

Belongs to the ClpX chaperone family. HslU subfamily. In terms of assembly, a double ring-shaped homohexamer of HslV is capped on each side by a ring-shaped HslU homohexamer. The assembly of the HslU/HslV complex is dependent on binding of ATP.

Its subcellular location is the cytoplasm. In terms of biological role, ATPase subunit of a proteasome-like degradation complex; this subunit has chaperone activity. The binding of ATP and its subsequent hydrolysis by HslU are essential for unfolding of protein substrates subsequently hydrolyzed by HslV. HslU recognizes the N-terminal part of its protein substrates and unfolds these before they are guided to HslV for hydrolysis. This Rickettsia peacockii (strain Rustic) protein is ATP-dependent protease ATPase subunit HslU.